A 114-amino-acid polypeptide reads, in one-letter code: Iron-sulfur cluster insertion protein ErpA (114 aa).

Iron-sulfur cluster-binding residues include Cys-42, Cys-106, and Cys-108.

It belongs to the HesB/IscA family. Homodimer. It depends on iron-sulfur cluster as a cofactor.

Functionally, required for insertion of 4Fe-4S clusters for at least IspG. This is Iron-sulfur cluster insertion protein ErpA from Klebsiella pneumoniae (strain 342).